The primary structure comprises 325 residues: MVKISCNKVLSNHSGSVTVVKYNSDGGYCLSGSSDKSIKLYNVSKGSMIHSFEEHGYGIGDLVSTSDNKQLFSCAEKQLYQWDIASGQVIRRFQNAHNDTITSVCVNLDSTLLFSGSSDRLVKAWDLRTKSINPVQILDDAKDTITSIIVNEQTITHNHSHGHGHSHGNNNNNQPHTHTQKEVITSSVDGCIRTYDVRMGTLVTYEDTIPISSVSITKDKKCFIASCTDETVKLIDIDSYETLKEYKGHKNKVYKINSCSNFDDSLIISGSEDNDFYIYELLSGKLLSKLSGHSNIITHVDSHPSKNQFITSSTDCTIRIWDQSE.

WD repeat units follow at residues 12–51 (NHSG…MIHS), 54–94 (EHGY…RRFQ), 96–135 (AHND…INPV), 166–205 (SHGN…LVTY), 206–245 (EDTI…TLKE), 248–291 (GHKN…SKLS), and 292–325 (GHSN…DQSE). Residues 157 to 179 (HNHSHGHGHSHGNNNNNQPHTHT) are disordered.

Belongs to the WD repeat MORG1 family.

Its subcellular location is the cytoplasm. Its function is as follows. Molecular scaffold protein for various multimeric protein complexes. Acts as a module in the assembly of a multicomponent scaffold for the ERK pathway, linking ERK responses to specific agonists. Also involved in response to hypoxia. The chain is WD repeat domain-containing protein 83 homolog (morg1) from Dictyostelium discoideum (Social amoeba).